The primary structure comprises 421 residues: Putative nickel insertion protein (421 aa).

This sequence belongs to the LarC family.

The sequence is that of Putative nickel insertion protein from Gloeobacter violaceus (strain ATCC 29082 / PCC 7421).